The chain runs to 692 residues: Elongation factor G (692 aa).

A tr-type G domain is found at 8–283 (NRIRNIGIAA…AVIDYLPAPT (276 aa)). Residues 17–24 (AHIDAGKT), 81–85 (DTPGH), and 135–138 (NKMD) each bind GTP.

This sequence belongs to the TRAFAC class translation factor GTPase superfamily. Classic translation factor GTPase family. EF-G/EF-2 subfamily.

It is found in the cytoplasm. Catalyzes the GTP-dependent ribosomal translocation step during translation elongation. During this step, the ribosome changes from the pre-translocational (PRE) to the post-translocational (POST) state as the newly formed A-site-bound peptidyl-tRNA and P-site-bound deacylated tRNA move to the P and E sites, respectively. Catalyzes the coordinated movement of the two tRNA molecules, the mRNA and conformational changes in the ribosome. In Helicobacter pylori (strain HPAG1), this protein is Elongation factor G.